The primary structure comprises 422 residues: Serine--tRNA ligase (422 aa).

231–233 is an L-serine binding site; the sequence is TGE. Residue 262 to 264 participates in ATP binding; the sequence is RQE. Residue Glu-285 coordinates L-serine. 349-352 is an ATP binding site; sequence EISS. Ser-384 contacts L-serine.

The protein belongs to the class-II aminoacyl-tRNA synthetase family. Type-1 seryl-tRNA synthetase subfamily. Homodimer. The tRNA molecule binds across the dimer.

Its subcellular location is the cytoplasm. The catalysed reaction is tRNA(Ser) + L-serine + ATP = L-seryl-tRNA(Ser) + AMP + diphosphate + H(+). It catalyses the reaction tRNA(Sec) + L-serine + ATP = L-seryl-tRNA(Sec) + AMP + diphosphate + H(+). It functions in the pathway aminoacyl-tRNA biosynthesis; selenocysteinyl-tRNA(Sec) biosynthesis; L-seryl-tRNA(Sec) from L-serine and tRNA(Sec): step 1/1. Functionally, catalyzes the attachment of serine to tRNA(Ser). Is also able to aminoacylate tRNA(Sec) with serine, to form the misacylated tRNA L-seryl-tRNA(Sec), which will be further converted into selenocysteinyl-tRNA(Sec). The protein is Serine--tRNA ligase of Mesoplasma florum (strain ATCC 33453 / NBRC 100688 / NCTC 11704 / L1) (Acholeplasma florum).